The primary structure comprises 1132 residues: Serine/threonine-protein kinase spk-1 (1132 aa).

The helical transmembrane segment at 75–95 (GGSLILTDIFPTVLFMFVVLF) threads the bilayer. Disordered stretches follow at residues 240–388 (NEDQ…DSDD) and 419–481 (NKKA…KRGG). Composition is skewed to acidic residues over residues 281 to 290 (SEDEDVESQE) and 311 to 336 (DEPIEEELASCHSDEDDHQNEVLGDE). The span at 362–372 (DSSVSSSTSST) shows a compositional bias: low complexity. The segment covering 373-388 (PDDDEDDSATSYDSDD) has biased composition (acidic residues). Basic and acidic residues predominate over residues 421–433 (KAEVNANEERMDD). The segment covering 434–443 (VSVSPGRSDS) has biased composition (low complexity). The Protein kinase domain occupies 495–1044 (YHVIRKLGWG…ANDALKHPFL (550 aa)). Residues 501–509 (LGWGHFSTV) and Lys-524 each bind ATP. Catalysis depends on Asp-628, which acts as the Proton acceptor. A disordered region spans residues 1066–1121 (QVPEALDGNQEVYRDENDSNSASERSANRSAGSDDEEEFHMDRPGPSGVINEPADV). Low complexity predominate over residues 1084-1096 (SNSASERSANRSA).

This sequence belongs to the protein kinase superfamily. Ser/Thr protein kinase family.

The protein resides in the membrane. It carries out the reaction L-seryl-[protein] + ATP = O-phospho-L-seryl-[protein] + ADP + H(+). The enzyme catalyses L-threonyl-[protein] + ATP = O-phospho-L-threonyl-[protein] + ADP + H(+). Its function is as follows. Required for embryogenesis and germline development in both adult hermaphrodites and males. SR-protein kinase (SRPK) that binds directly to and phosphorylates RS domains. The protein is Serine/threonine-protein kinase spk-1 (spk-1) of Caenorhabditis briggsae.